Here is a 147-residue protein sequence, read N- to C-terminus: Hemoglobin subunit gamma (147 aa).

The Globin domain occupies 3-147 (HFTAEEKAAI…VANALAYKYH (145 aa)). 2 residues coordinate heme b: histidine 64 and histidine 93.

It belongs to the globin family. In terms of assembly, heterotetramer of two alpha chains and two gamma chains in fetal hemoglobin (Hb F). Red blood cells.

Gamma chains make up the fetal hemoglobin F, in combination with alpha chains. This is Hemoglobin subunit gamma (HBG) from Elephas maximus (Indian elephant).